Reading from the N-terminus, the 273-residue chain is Undecaprenyl-diphosphatase (273 aa).

Transmembrane regions (helical) follow at residues 4–24 (MELW…FAPV), 48–68 (AANT…VVVF), 89–109 (LNLI…VLFE), 116–136 (LFST…MIAA), 152–172 (ITYK…WPGF), 193–213 (ADFT…LSLL), 222–242 (ADIP…LLAI), and 252–272 (IRLV…YFLY).

Belongs to the UppP family.

Its subcellular location is the cell membrane. The catalysed reaction is di-trans,octa-cis-undecaprenyl diphosphate + H2O = di-trans,octa-cis-undecaprenyl phosphate + phosphate + H(+). Catalyzes the dephosphorylation of undecaprenyl diphosphate (UPP). Confers resistance to bacitracin. This Geobacillus kaustophilus (strain HTA426) protein is Undecaprenyl-diphosphatase.